Here is a 61-residue protein sequence, read N- to C-terminus: Small ribosomal subunit protein uS14 (61 aa).

Zn(2+)-binding residues include C24, C27, C40, and C43.

This sequence belongs to the universal ribosomal protein uS14 family. Zinc-binding uS14 subfamily. As to quaternary structure, part of the 30S ribosomal subunit. Contacts proteins S3 and S10. Zn(2+) is required as a cofactor.

Functionally, binds 16S rRNA, required for the assembly of 30S particles and may also be responsible for determining the conformation of the 16S rRNA at the A site. The chain is Small ribosomal subunit protein uS14 from Geotalea uraniireducens (strain Rf4) (Geobacter uraniireducens).